A 445-amino-acid polypeptide reads, in one-letter code: tRNA modification GTPase MnmE (445 aa).

The (6S)-5-formyl-5,6,7,8-tetrahydrofolate site is built by arginine 20, glutamate 79, and lysine 119. The 157-residue stretch at 215–371 (GLKLAIIGPP…ILKNIEEIAE (157 aa)) folds into the TrmE-type G domain. Position 225 (asparagine 225) interacts with K(+). GTP-binding positions include 225–230 (NAGKSS), 244–250 (SNIAGTT), and 269–272 (DTAG). Serine 229 is a Mg(2+) binding site. 3 residues coordinate K(+): serine 244, isoleucine 246, and threonine 249. Position 250 (threonine 250) interacts with Mg(2+). Residue lysine 445 participates in (6S)-5-formyl-5,6,7,8-tetrahydrofolate binding.

Belongs to the TRAFAC class TrmE-Era-EngA-EngB-Septin-like GTPase superfamily. TrmE GTPase family. Homodimer. Heterotetramer of two MnmE and two MnmG subunits. K(+) is required as a cofactor.

It localises to the cytoplasm. Functionally, exhibits a very high intrinsic GTPase hydrolysis rate. Involved in the addition of a carboxymethylaminomethyl (cmnm) group at the wobble position (U34) of certain tRNAs, forming tRNA-cmnm(5)s(2)U34. The protein is tRNA modification GTPase MnmE of Rickettsia bellii (strain OSU 85-389).